Consider the following 254-residue polypeptide: Tumor necrosis factor ligand superfamily member 9 (254 aa).

The Cytoplasmic portion of the chain corresponds to 1–28; it reads MEYASDASLDPEAPWPPAPRARACRVLP. A helical; Signal-anchor for type II membrane protein membrane pass occupies residues 29-49; the sequence is WALVAGLLLLLLLAAACAVFL. The Extracellular portion of the chain corresponds to 50–254; sequence ACPWAVSGAR…PAGLPSPRSE (205 aa). The THD domain maps to 91 to 240; sequence MFAQLVAQNV…GATVLGLFRV (150 aa).

This sequence belongs to the tumor necrosis factor family. In terms of assembly, homotrimer. Expressed in brain, placenta, lung, skeletal muscle and kidney.

It is found in the membrane. Cytokine that binds to TNFRSF9. Induces the proliferation of activated peripheral blood T-cells. May have a role in activation-induced cell death (AICD). May play a role in cognate interactions between T-cells and B-cells/macrophages. This is Tumor necrosis factor ligand superfamily member 9 (TNFSF9) from Homo sapiens (Human).